Reading from the N-terminus, the 541-residue chain is Threonine--tRNA ligase catalytic subunit (541 aa).

The catalytic stretch occupies residues 135 to 429; sequence DHRIIGERMD…LLEHFRGKLP (295 aa). Zn(2+)-binding residues include C227, H278, and H406.

This sequence belongs to the class-II aminoacyl-tRNA synthetase family. Homodimer. Probably interacts with its editing subunit. Zn(2+) serves as cofactor.

It is found in the cytoplasm. It carries out the reaction tRNA(Thr) + L-threonine + ATP = L-threonyl-tRNA(Thr) + AMP + diphosphate + H(+). Catalyzes the attachment of threonine to tRNA(Thr) in a two-step reaction: L-threonine is first activated by ATP to form Thr-AMP and then transferred to the acceptor end of tRNA(Thr). Also activates L-serine and transfers it to tRNA(Thr) but cannot deacylate incorrectly charged amino acid; unlike most archaea the editing function is found in a freestanding protein. In Metallosphaera sedula (strain ATCC 51363 / DSM 5348 / JCM 9185 / NBRC 15509 / TH2), this protein is Threonine--tRNA ligase catalytic subunit.